A 304-amino-acid chain; its full sequence is Dihydroorotate dehydrogenase B (NAD(+)), catalytic subunit (304 aa).

FMN is bound by residues Ser-22 and 46–47 (KG). Substrate-binding positions include Lys-46 and 70-74 (NSIGL). 2 residues coordinate FMN: Asn-100 and Asn-128. Residue Asn-128 participates in substrate binding. The Nucleophile role is filled by Cys-131. Residues Lys-166 and Ile-192 each contribute to the FMN site. 193–194 (NT) is a binding site for substrate. FMN contacts are provided by residues Gly-218, 244 to 245 (GG), and 266 to 267 (GT).

Belongs to the dihydroorotate dehydrogenase family. Type 1 subfamily. Heterotetramer of 2 PyrK and 2 PyrD type B subunits. However, the metal reductase complex seems to be composed of a heterooctamer of 4 PyrK and 4 PyrD subunits. The cofactor is FMN.

It is found in the cytoplasm. It carries out the reaction (S)-dihydroorotate + NAD(+) = orotate + NADH + H(+). It participates in pyrimidine metabolism; UMP biosynthesis via de novo pathway; orotate from (S)-dihydroorotate (NAD(+) route): step 1/1. Functionally, catalyzes the conversion of dihydroorotate to orotate with NAD(+) as electron acceptor. Its function is as follows. Together with PyrK, also forms a metal reductase complex able to reduce Fe(III)-chelates to Fe(II)-chelates, as well as soluble Cr(VI) and U(VI), using NADH as electron donor. To a lesser extent, can also use NADPH as an electron donor. Is unable to reduce riboflavin and FMN with NADH as electron donor. May have an in vivo role in metal reduction in D.reducens, which is an organism capable of reducing contaminant heavy metals and radionuclides. This chain is Dihydroorotate dehydrogenase B (NAD(+)), catalytic subunit (pyrD), found in Desulforamulus reducens (strain ATCC BAA-1160 / DSM 100696 / MI-1) (Desulfotomaculum reducens).